An 892-amino-acid polypeptide reads, in one-letter code: Putative disease resistance protein At4g10780 (892 aa).

A coiled-coil region spans residues 24–63 (SLGNYIHKLKDNIVALEKAIEDLTATRDDVLRRVQMEEGK). The region spanning 137-440 (IVAAPAPKLE…ICEGFIDGNI (304 aa)) is the NB-ARC domain. ATP is bound at residue 180–187 (GMGGVGKT). 6 LRR repeats span residues 515-536 (AVRR…PECP), 537-559 (ELTT…FFRH), 562-584 (KLVV…ISEL), 586-608 (ALRY…QDLK), 609-631 (TLIH…SKLS), and 632-654 (SLRT…KELH).

This sequence belongs to the disease resistance NB-LRR family.

Functionally, potential disease resistance protein. In Arabidopsis thaliana (Mouse-ear cress), this protein is Putative disease resistance protein At4g10780.